Here is a 213-residue protein sequence, read N- to C-terminus: Peptide methionine sulfoxide reductase MsrA (213 aa).

Cys53 is a catalytic residue.

It belongs to the MsrA Met sulfoxide reductase family.

It carries out the reaction L-methionyl-[protein] + [thioredoxin]-disulfide + H2O = L-methionyl-(S)-S-oxide-[protein] + [thioredoxin]-dithiol. It catalyses the reaction [thioredoxin]-disulfide + L-methionine + H2O = L-methionine (S)-S-oxide + [thioredoxin]-dithiol. Its function is as follows. Has an important function as a repair enzyme for proteins that have been inactivated by oxidation. Catalyzes the reversible oxidation-reduction of methionine sulfoxide in proteins to methionine. The sequence is that of Peptide methionine sulfoxide reductase MsrA from Serratia proteamaculans (strain 568).